Here is a 70-residue protein sequence, read N- to C-terminus: DNA-directed RNA polymerase subunit epsilon (70 aa).

This sequence belongs to the RNA polymerase subunit epsilon family. As to quaternary structure, RNAP is composed of a core of 2 alpha, a beta and a beta' subunit. The core is associated with a delta subunit, and at least one of epsilon or omega. When a sigma factor is associated with the core the holoenzyme is formed, which can initiate transcription.

It carries out the reaction RNA(n) + a ribonucleoside 5'-triphosphate = RNA(n+1) + diphosphate. Functionally, a non-essential component of RNA polymerase (RNAP). This is DNA-directed RNA polymerase subunit epsilon from Leuconostoc mesenteroides subsp. mesenteroides (strain ATCC 8293 / DSM 20343 / BCRC 11652 / CCM 1803 / JCM 6124 / NCDO 523 / NBRC 100496 / NCIMB 8023 / NCTC 12954 / NRRL B-1118 / 37Y).